The primary structure comprises 283 residues: Movement protein (283 aa).

The protein belongs to the cucumovirus movement protein family.

It localises to the host cell junction. The protein resides in the host plasmodesma. In terms of biological role, transports viral genome to neighboring plant cells directly through plasmosdesmata, without any budding. The movement protein allows efficient cell to cell propagation, by bypassing the host cell wall barrier. Acts by forming a tubular structure at the host plasmodesmata, enlarging it enough to allow free passage of virion capsids. The chain is Movement protein from Cucumis sativus (Cucumber).